Here is a 256-residue protein sequence, read N- to C-terminus: Nuclear shuttle protein (256 aa).

The short motif at 21 to 42 (NSLIRQQSLFKRNVSKRRPFQT) is the Bipartite nuclear localization signal element. The Nuclear localization signal motif lies at 81–96 (DIAKSLPNRTRSYIKL). The segment at 150-187 (ELFGARIHSHGNLAIVPSLKDRFYIRHVLKRVISVEKD) is interaction with Arabidopsis thaliana NSI protein.

The protein belongs to the begomovirus nuclear shuttle protein family. As to quaternary structure, binds to single-stranded and double-stranded viral DNA. Interacts with the host nuclear shuttle interacting (NSI) protein. This interaction may allow NSP to recruit NSI monomers to the viral genome and thus regulate nuclear export of viral genome by NSP.

It localises to the host nucleus. Its subcellular location is the host cytoplasm. The protein localises to the host cell membrane. In terms of biological role, binds to the genomic viral ssDNA, shuttles it into and out of the cell nucleus. Begomoviruses use 2 proteins to transport their DNA from cell to cell. The nuclear shuttle protein (NSP) shuttles it between nucleus and cytoplasm and the movement protein (MP) probably transports the DNA-NSP complex to the cell periphery and facilitates movement across the cell wall. This is Nuclear shuttle protein from Potato yellow mosaic virus (isolate Venezuela) (PYMV).